The primary structure comprises 233 residues: DnaA regulatory inactivator Hda (233 aa).

It belongs to the DnaA family. HdA subfamily. As to quaternary structure, the active form seems to be an ADP-bound monomer. Forms the RIDA complex (regulatory inactivation of DnaA) of ATP-DnaA, ADP-Hda and the DNA-loaded beta sliding clamp (dnaN).

Its function is as follows. Mediates the interaction of DNA replication initiator protein DnaA with DNA polymerase subunit beta sliding clamp (dnaN). Stimulates hydrolysis of ATP-DnaA to ADP-DnaA, rendering DnaA inactive for reinitiation, a process called regulatory inhibition of DnaA or RIDA. This chain is DnaA regulatory inactivator Hda, found in Photorhabdus laumondii subsp. laumondii (strain DSM 15139 / CIP 105565 / TT01) (Photorhabdus luminescens subsp. laumondii).